A 271-amino-acid chain; its full sequence is Glutamate racemase (271 aa).

Residues 10–11 (DS) and 42–43 (YG) each bind substrate. Cys-73 (proton donor/acceptor) is an active-site residue. 74–75 (NT) is a substrate binding site. Cys-183 serves as the catalytic Proton donor/acceptor. 184-185 (TH) is a binding site for substrate.

The protein belongs to the aspartate/glutamate racemases family.

It carries out the reaction L-glutamate = D-glutamate. It functions in the pathway cell wall biogenesis; peptidoglycan biosynthesis. Provides the (R)-glutamate required for cell wall biosynthesis. The protein is Glutamate racemase of Lactococcus lactis subsp. cremoris (strain MG1363).